A 113-amino-acid polypeptide reads, in one-letter code: DNA-binding protein PTO0204 (113 aa).

Belongs to the PDCD5 family.

In Picrophilus torridus (strain ATCC 700027 / DSM 9790 / JCM 10055 / NBRC 100828 / KAW 2/3), this protein is DNA-binding protein PTO0204.